Here is a 248-residue protein sequence, read N- to C-terminus: DNA repair protein RecO (248 aa).

It belongs to the RecO family.

Functionally, involved in DNA repair and RecF pathway recombination. This Chelativorans sp. (strain BNC1) protein is DNA repair protein RecO.